A 503-amino-acid polypeptide reads, in one-letter code: MEEFQGYLELYRSQQHDFLYPLIFREYIYALAHDRGLNRSVLLDNVGYDKKSSLLIIKRLISRMYQQNHFLISVNDSNQNKFFGYNKNLYSQMISEGFAVIVEIPFSLRLVSSLKETETVKSYNLRSIHSIFPFFEDKFPHLNYASDVLIPYPIHLEILVQTLRYCVKDPSSLHLLRLFLHEYYNWNTLITPKKSIFAKSNQRLFLLLYNSYVCEYESILLFLRNQSNHLRLTSSGILFERIRFYEKIKYPVKEVFANDFPATLWFFKDPFIQYVRYQGKSILASKDTPLLMNKWKYYLVHFWQCHFYVWSQPGRIHINQLSKHSFDFLGYLSSIRPNISVVRSQLLENSFLMDNAMKKLDTLFPIIPMIGSLAKVKFCNTSGHPISKSSWADSSDSDIIDRFVRIGGNLSHYYSGSSKKKSLYRIKYILRLSCVKTLARKHKSTVRTFLKRLGPKLLDEFFTEEEQIFSLLFPRTSSTLKRFYRGRIWYLDILCINDLVNHE.

The protein belongs to the intron maturase 2 family. MatK subfamily.

The protein localises to the plastid. Its subcellular location is the chloroplast. In terms of biological role, usually encoded in the trnK tRNA gene intron. Probably assists in splicing its own and other chloroplast group II introns. In Rosa acicularis (Prickly rose), this protein is Maturase K.